We begin with the raw amino-acid sequence, 146 residues long: Putative ankyrin repeat protein FPV224 (146 aa).

4 ANK repeats span residues 9–38 (SLST…DASI), 42–79 (KGIT…TRDI), 94–126 (YVFV…RIDE), and 127–145 (YYYS…KAVN).

The polypeptide is Putative ankyrin repeat protein FPV224 (Fowlpox virus (strain NVSL) (FPV)).